The sequence spans 1978 residues: Sodium channel protein type 8 subunit alpha (1978 aa).

Disordered stretches follow at residues 1 to 20 (MAARLLAPPGPDSFKPFTPE) and 28 to 62 (RIAESKLKKPPKADGSHREDDEDSKPKPNSDLEAG). Topologically, residues 1 to 132 (MAARLLAPPG…RIAIKILIHS (132 aa)) are cytoplasmic. A compositionally biased stretch (basic and acidic residues) spans 28-61 (RIAESKLKKPPKADGSHREDDEDSKPKPNSDLEA). An I repeat occupies 114–442 (ILSPFNLIRR…KAMLEQLKKQ (329 aa)). A helical membrane pass occupies residues 133 to 151 (VFSMIIMCTILTNCVFMTF). Topologically, residues 152–158 (SNPPEWS) are extracellular. Residues 159–179 (KNVEYTFTGIYTFESLVKIIA) form a helical membrane-spanning segment. Over 180-193 (RGFCIDGFTFLRDP) the chain is Cytoplasmic. Residues 194–211 (WNWLDFSVIMMAYVTEFV) traverse the membrane as a helical segment. Residues 212-217 (DLGNVS) are Extracellular-facing. Asn215 is a glycosylation site (N-linked (GlcNAc...) asparagine). The chain crosses the membrane as a helical span at residues 218-234 (ALRTFRVLRALKTISVI). At 235–253 (PGLKTIVGALIQSVKKLSD) the chain is on the cytoplasmic side. The chain crosses the membrane as a helical span at residues 254 to 273 (VMILTVFCLSVFALIGLQLF). At 274–355 (MGNLRNKCVV…PNYGYTSFDT (82 aa)) the chain is on the extracellular side. Cys281 and Cys333 are joined by a disulfide. N-linked (GlcNAc...) asparagine glycosylation is found at Asn289, Asn295, Asn308, and Asn326. Residues 356–380 (FSWAFLALFRLMTQDYWENLYQLTL) constitute an intramembrane region (pore-forming). A Na(+)-binding site is contributed by Glu373. Topologically, residues 381-387 (RAAGKTY) are extracellular. The chain crosses the membrane as a helical span at residues 388 to 408 (MIFFVLVIFVGSFYLVNLILA). The Cytoplasmic portion of the chain corresponds to 409–751 (VVAMAYEEQN…EIVNLIVMDP (343 aa)). Disordered stretches follow at residues 446–530 (AQAA…KAFR) and 576–597 (DPGSENEFADDEHSTVEESEGR). Positions 473-486 (SPRSSSELSKLSSK) are enriched in low complexity. A compositionally biased stretch (basic residues) spans 489 to 500 (KERRNRRKKRKQ). Composition is skewed to basic and acidic residues over residues 501–530 (KELSEGEEKGDPEKVFKSESEDGMRRKAFR) and 586–597 (DEHSTVEESEGR). Phosphoserine is present on residues Ser518 and Ser520. Residues 733 to 1005 (CHPYWIKLKE…QISVIRIKKG (273 aa)) form an II repeat. Residues 752 to 770 (FVDLAITICIVLNTLFMAM) form a helical membrane-spanning segment. Residues 771 to 781 (EHHPMTPQFEH) lie on the Extracellular side of the membrane. A helical transmembrane segment spans residues 782–801 (VLAVGNLVFTGIFTAEMFLK). The Cytoplasmic segment spans residues 802–815 (LIAMDPYYYFQEGW). A helical membrane pass occupies residues 816-835 (NIFDGFIVSLSLMELSLADV). The Extracellular segment spans residues 836 to 837 (EG). The helical transmembrane segment at 838-855 (LSVLRSFRLLRVFKLAKS) threads the bilayer. The Cytoplasmic portion of the chain corresponds to 856–871 (WPTLNMLIKIIGNSVG). The helical transmembrane segment at 872–890 (ALGNLTLVLAIIVFIFAVV) threads the bilayer. At 891 to 919 (GMQLFGKSYKECVCKINQECKLPRWHMND) the chain is on the extracellular side. A disulfide bond links Cys904 and Cys910. Residues 920–940 (FFHSFLIVFRVLCGEWIETMW) constitute an intramembrane region (pore-forming). Residues Glu934 and Glu937 each contribute to the Na(+) site. Over 941-953 (DCMEVAGQAMCLI) the chain is Extracellular. Cys942 and Cys951 are oxidised to a cystine. A helical membrane pass occupies residues 954–974 (VFMMVMVIGNLVVLNLFLALL). At 975 to 1197 (LSSFSADNLA…TCFLIVEHNW (223 aa)) the chain is on the cytoplasmic side. The disordered stretch occupies residues 1105-1146 (NLNTEDVSSESDPEGSKDKLDDTSSSEGSTIDIKPEVEEVPV). An III repeat occupies 1178-1493 (LGKSWWILRK…KKYYNAMKKL (316 aa)). A helical membrane pass occupies residues 1198 to 1215 (FETFIIFMILLSSGALAF). Topologically, residues 1216–1228 (EDIYIEQRKTIRT) are extracellular. Residues 1229–1247 (ILEYADKVFTYIFILEMLL) form a helical membrane-spanning segment. The Cytoplasmic segment spans residues 1248–1261 (KWTAYGFVKFFTNA). The chain crosses the membrane as a helical span at residues 1262–1280 (WCWLDFLIVAVSLVSLIAN). The Extracellular portion of the chain corresponds to 1281 to 1288 (ALGYSELG). Residues 1289-1307 (AIKSLRTLRALRPLRALSR) form a helical membrane-spanning segment. Residues 1308 to 1324 (FEGMRVVVNALVGAIPS) lie on the Cytoplasmic side of the membrane. A helical membrane pass occupies residues 1325-1344 (IMNVLLVCLIFWLIFSIMGV). Over 1345 to 1397 (NLFAGKYHYCFNETSEIRFEIDIVNNKTDCEKLMEGNSTEIRWKNVKINFDNV) the chain is Extracellular. Cys1354 and Cys1374 form a disulfide bridge. 3 N-linked (GlcNAc...) asparagine glycosylation sites follow: Asn1356, Asn1370, and Asn1381. The segment at residues 1398-1419 (GAGYLALLQVATFKGWMDIMYA) is an intramembrane region (pore-forming). Residues 1420-1436 (AVDSRKPDEQPDYEGNI) are Extracellular-facing. Residues 1437–1458 (YMYIYFVIFIIFGSFFTLNLFI) traverse the membrane as a helical segment. Topologically, residues 1459 to 1521 (GVIIDNFNQQ…IVFDFVTQQA (63 aa)) are cytoplasmic. Phosphoserine; by PKC is present on Ser1495. An IV repeat occupies 1502-1799 (IPRPLNKIQG…WEKFDPDATQ (298 aa)). Residues 1522–1539 (FDIVIMMLICLNMVTMMV) traverse the membrane as a helical segment. Residues 1540–1550 (ETDTQSKQMEN) lie on the Extracellular side of the membrane. Residues 1551–1569 (ILYWINLVFVIFFTCECVL) traverse the membrane as a helical segment. Over 1570 to 1581 (KMFALRHYYFTI) the chain is Cytoplasmic. The chain crosses the membrane as a helical span at residues 1582–1599 (GWNIFDFVVVILSIVGMF). Topologically, residues 1600 to 1612 (LADIIEKYFVSPT) are extracellular. The helical transmembrane segment at 1613–1629 (LFRVIRLARIGRILRLI) threads the bilayer. The Cytoplasmic segment spans residues 1630–1648 (KGAKGIRTLLFALMMSLPA). Residues 1649-1666 (LFNIGLLLFLVMFIFSIF) form a helical membrane-spanning segment. Over 1667 to 1688 (GMSNFAYVKHEAGIDDMFNFET) the chain is Extracellular. An intramembrane region (pore-forming) is located at residues 1689–1711 (FGNSMICLFQITTSAGWDGLLLP). Topologically, residues 1712–1740 (ILNRPPDCSLDKEHPGSGFKGDCGNPSVG) are extracellular. A disulfide bridge connects residues Cys1719 and Cys1734. A helical membrane pass occupies residues 1741–1763 (IFFFVSYIIISFLIVVNMYIAII). Residues 1764-1978 (LENFSVATEE…RQKEVRESKC (215 aa)) lie on the Cytoplasmic side of the membrane. Residues 1893–1922 (EEVSAVVLQRAYRGHLARRGFICRKMASNK) enclose the IQ domain. The tract at residues 1923–1978 (LENGGTHRDKKESTPSTASLPSYDSVTKPDKEKQQRAEEGRRERAKRQKEVRESKC) is disordered. Over residues 1936–1947 (TPSTASLPSYDS) the composition is skewed to polar residues. Positions 1949-1978 (TKPDKEKQQRAEEGRRERAKRQKEVRESKC) are enriched in basic and acidic residues.

It belongs to the sodium channel (TC 1.A.1.10) family. Nav1.6/SCN8A subfamily. The voltage-sensitive sodium channel consists of an ion-conducting pore-forming alpha subunit regulated by one or more beta-1 (SCN1B), beta-2 (SCN2B), beta-3 (SCN3B) and/or beta-4 (SCN4B) subunits. Beta-1 (SCN1B) and beta-3 (SCN3B) are non-covalently associated with alpha, while beta-2 (SCN2B) and beta-4 (SCN4B) are covalently linked by disulfide bonds. Interacts with NEDD4 and NEDD4L. Interacts with FGF13. Interacts with FGF14, GBG3, GBB2 and SCN1B. Interacts with TMEM233. Interacts with the conotoxin GVIIJ. Interacts with CALM1; the interaction modulates the inactivation rate of SCN8A. Post-translationally, may be ubiquitinated by NEDD4L; which would promote its endocytosis. Phosphorylation at Ser-1495 by PKC in a highly conserved cytoplasmic loop slows inactivation of the sodium channel and reduces peak sodium currents. Isoform 1 is highly expressed in brain, moderately in spinal cord, and at low levels in dorsal root ganglia, nodose ganglia and superior cervical ganglia. Not detected in sciatic nerve and non-neuronal tissues. Isoform 2 is hardly detectable, if at all, in brain, expressed at low levels in spinal cord and at highest levels in dorsal root ganglia.

Its subcellular location is the cell membrane. It localises to the cell projection. The protein resides in the axon. The catalysed reaction is Na(+)(in) = Na(+)(out). Its function is as follows. Pore-forming subunit of a voltage-gated sodium channel complex assuming opened or closed conformations in response to the voltage difference across membranes and through which sodium ions selectively pass along their electrochemical gradient. Contributes to neuronal excitability by regulating action potential threshold and propagation. In Rattus norvegicus (Rat), this protein is Sodium channel protein type 8 subunit alpha.